A 108-amino-acid polypeptide reads, in one-letter code: Nucleoid-associated protein GWCH70_0020 (108 aa).

The segment at 1-34 (MMRGGMGNMQKMMKQMQKMQKEMQKAQEQLAEKT) is disordered. Positions 9–18 (MQKMMKQMQK) are enriched in low complexity. The segment covering 19-34 (MQKEMQKAQEQLAEKT) has biased composition (basic and acidic residues).

This sequence belongs to the YbaB/EbfC family. In terms of assembly, homodimer.

The protein resides in the cytoplasm. The protein localises to the nucleoid. Binds to DNA and alters its conformation. May be involved in regulation of gene expression, nucleoid organization and DNA protection. This Geobacillus sp. (strain WCH70) protein is Nucleoid-associated protein GWCH70_0020.